Here is a 188-residue protein sequence, read N- to C-terminus: NADH-quinone oxidoreductase subunit B (188 aa).

[4Fe-4S] cluster contacts are provided by Cys-67, Cys-68, Cys-132, and Cys-162.

This sequence belongs to the complex I 20 kDa subunit family. NDH-1 is composed of 14 different subunits. Subunits NuoB, C, D, E, F, and G constitute the peripheral sector of the complex. [4Fe-4S] cluster serves as cofactor.

Its subcellular location is the cell inner membrane. The catalysed reaction is a quinone + NADH + 5 H(+)(in) = a quinol + NAD(+) + 4 H(+)(out). NDH-1 shuttles electrons from NADH, via FMN and iron-sulfur (Fe-S) centers, to quinones in the respiratory chain. Couples the redox reaction to proton translocation (for every two electrons transferred, four hydrogen ions are translocated across the cytoplasmic membrane), and thus conserves the redox energy in a proton gradient. The sequence is that of NADH-quinone oxidoreductase subunit B from Maricaulis maris (strain MCS10) (Caulobacter maris).